The following is an 804-amino-acid chain: MSYNHKEIEKKWQKYWAKNNCFNTLDDPNKEKFYALDMFPYPSGQGLHVGHPEGYTATDILSRMKRAQGYNVLHPMGWDAFGLPAEQYALDTGNDPAEFTKKNIETFRRQINSLGFSYDWNREINTTDPEYYKWTQWIFTKLYEKGLAYEAEVAVNWVPELGTVISNEEVIDGKSERGGYDVVRRPMRQWMLKITAYADRLLEDLELVDWPESIKDMQRNWIGRSEGANVTFKVAGTEESFTVFTTRPDTLFGATYTVLAPELELVKKITTPEQTAAVEAYIEETSKKSDLNRTDLAKEKTGVFTGAYAINPVNGQEIPIWIGDYVLASYGTGAIMAVPAHDERDYEFAKTFGIDILPVIAGGDITTEAYTGDGPHINSDFLNGLNKAEAIAKMNEWLEENHVGKKEVSYRLRDWLFSRQRYWGEPIPVIHWEDGTTTTVPESELPLRLPVTSDIRPSGTGESPLANIDEWVNVVDPETGMKGKRETNTMPQWAGSSWYYLRFIDPHNKNEIADFEKLKRWLPVDIYIGGAEHAVLHLLYARFWHKFLYDIGVVPTKEPFQKLYNQGMILGENNEKMSKSRGNVVNPDDVVAKYGADTLRLYEMFMGPLDASIAWNENGLEGSRKFLDRVWRLIVDEEGKMRDRITTINDGRLTKVYHQTVKKVTEDMANLHFNTAISQLMVFVNEANKVDALPYEYVEGFVQLLAPIAPHIGEELWQILGNEESLTYVPWPTYDETALVEDEVEVVFQVNGKLRGKQNVARGLSKEELEQIAMNHEAVKEFIEGKTVRKVIAVPDKLVNIVAN.

A 'HIGH' region motif is present at residues 40 to 51 (PYPSGQGLHVGH). The short motif at 576-580 (KMSKS) is the 'KMSKS' region element. Residue K579 coordinates ATP.

The protein belongs to the class-I aminoacyl-tRNA synthetase family.

It is found in the cytoplasm. The catalysed reaction is tRNA(Leu) + L-leucine + ATP = L-leucyl-tRNA(Leu) + AMP + diphosphate. This chain is Leucine--tRNA ligase, found in Enterococcus faecalis (strain ATCC 700802 / V583).